The following is a 448-amino-acid chain: Phosphoglucosamine mutase (448 aa).

The active-site Phosphoserine intermediate is Ser-104. Ser-104, Asp-243, Asp-245, and Asp-247 together coordinate Mg(2+). Phosphoserine is present on Ser-104.

The protein belongs to the phosphohexose mutase family. Mg(2+) serves as cofactor. In terms of processing, activated by phosphorylation.

It catalyses the reaction alpha-D-glucosamine 1-phosphate = D-glucosamine 6-phosphate. Functionally, catalyzes the conversion of glucosamine-6-phosphate to glucosamine-1-phosphate. This chain is Phosphoglucosamine mutase, found in Xylella fastidiosa (strain Temecula1 / ATCC 700964).